The following is a 239-amino-acid chain: Fatty acid metabolism regulator protein (239 aa).

The HTH gntR-type domain occupies 6-74; sequence QSPAGFAEEY…HGKPTKVNNF (69 aa). The segment at residues 34 to 53 is a DNA-binding region (H-T-H motif); it reads ERELSELIGVTRTTLREVLQ.

As to quaternary structure, homodimer.

Its subcellular location is the cytoplasm. Multifunctional regulator of fatty acid metabolism. This chain is Fatty acid metabolism regulator protein, found in Escherichia fergusonii (strain ATCC 35469 / DSM 13698 / CCUG 18766 / IAM 14443 / JCM 21226 / LMG 7866 / NBRC 102419 / NCTC 12128 / CDC 0568-73).